Here is a 247-residue protein sequence, read N- to C-terminus: F-box and leucine-rich protein 22 (247 aa).

The 47-residue stretch at threonine 6–leucine 52 folds into the F-box domain. Disordered stretches follow at residues serine 124–serine 154 and glycine 173–glutamine 247. The span at glutamate 184–alanine 200 shows a compositional bias: pro residues.

Directly interacts with SKP1 and CUL1. As to expression, enriched in cardiac muscle.

It is found in the cytoplasm. Its subcellular location is the myofibril. It localises to the sarcomere. The protein localises to the z line. It functions in the pathway protein modification; protein ubiquitination. In terms of biological role, substrate-recognition component of the SCF (SKP1-CUL1-F-box protein)-type E3 ubiquitin ligase complex. Promotes ubiquitination of sarcomeric proteins alpha-actinin-2 (ACTN2) and filamin-C (FLNC). The chain is F-box and leucine-rich protein 22 (FBXL22) from Homo sapiens (Human).